A 146-amino-acid chain; its full sequence is Large ribosomal subunit protein uL11 (146 aa).

Belongs to the universal ribosomal protein uL11 family. Part of the ribosomal stalk of the 50S ribosomal subunit. Interacts with L10 and the large rRNA to form the base of the stalk. L10 forms an elongated spine to which L12 dimers bind in a sequential fashion forming a multimeric L10(L12)X complex. One or more lysine residues are methylated.

In terms of biological role, forms part of the ribosomal stalk which helps the ribosome interact with GTP-bound translation factors. The polypeptide is Large ribosomal subunit protein uL11 (Blochmanniella floridana).